A 454-amino-acid chain; its full sequence is Histidine--tRNA ligase (454 aa).

Belongs to the class-II aminoacyl-tRNA synthetase family. As to quaternary structure, homodimer.

The protein resides in the cytoplasm. The catalysed reaction is tRNA(His) + L-histidine + ATP = L-histidyl-tRNA(His) + AMP + diphosphate + H(+). The polypeptide is Histidine--tRNA ligase (Porphyromonas gingivalis (strain ATCC BAA-308 / W83)).